The chain runs to 629 residues: tRNA uridine 5-carboxymethylaminomethyl modification enzyme MnmG (629 aa).

FAD is bound by residues 13-18, V125, and S180; that span reads GGGHAG. 273–287 is an NAD(+) binding site; the sequence is GPRYCPSIEDKVMRF. An FAD-binding site is contributed by Q370.

It belongs to the MnmG family. Homodimer. Heterotetramer of two MnmE and two MnmG subunits. FAD serves as cofactor.

It localises to the cytoplasm. Functionally, NAD-binding protein involved in the addition of a carboxymethylaminomethyl (cmnm) group at the wobble position (U34) of certain tRNAs, forming tRNA-cmnm(5)s(2)U34. The protein is tRNA uridine 5-carboxymethylaminomethyl modification enzyme MnmG of Salmonella schwarzengrund (strain CVM19633).